We begin with the raw amino-acid sequence, 380 residues long: Tubulin alpha chain (380 aa).

7 residues coordinate GTP: Glu-46, Ser-115, Gly-119, Thr-120, Thr-154, Asn-181, and Asn-202. Glu-46 is a Mg(2+) binding site. The active site involves Glu-228.

It belongs to the tubulin family. Dimer of alpha and beta chains. A typical microtubule is a hollow water-filled tube with an outer diameter of 25 nm and an inner diameter of 15 nM. Alpha-beta heterodimers associate head-to-tail to form protofilaments running lengthwise along the microtubule wall with the beta-tubulin subunit facing the microtubule plus end conferring a structural polarity. Microtubules usually have 13 protofilaments but different protofilament numbers can be found in some organisms and specialized cells. Mg(2+) is required as a cofactor.

Its subcellular location is the cytoplasm. It is found in the cytoskeleton. It catalyses the reaction GTP + H2O = GDP + phosphate + H(+). In terms of biological role, tubulin is the major constituent of microtubules, a cylinder consisting of laterally associated linear protofilaments composed of alpha- and beta-tubulin heterodimers. Microtubules grow by the addition of GTP-tubulin dimers to the microtubule end, where a stabilizing cap forms. Below the cap, tubulin dimers are in GDP-bound state, owing to GTPase activity of alpha-tubulin. The polypeptide is Tubulin alpha chain (TUB1) (Encephalitozoon hellem (Microsporidian parasite)).